A 510-amino-acid chain; its full sequence is MIWHVQNENLILDSTRIFMKAFHLLLFDGSFIFPECILIFGLILLLMIDSTSDQKDIPWFYFISSTSLVMSITALLFRWREEPMIIFSGNFQTNNFNEIFQFLILLCSTLCIPLSVEYIECTEMAITEFLLFVLTATLGGMFLCGANDLITIFVAPECFSLCSYLLSGYTKKDVRSNEATMKYLLMGGASSSILVHGFSWLYGSSGGEIELQEIVNGLINTQMYNSPGILIALLFITVGIGFKLSLAPSHQWTPDVYEGSPTPVVAFLSVTSKVAASASATRIFDIPFYFSSNEWHLLLEILAILSMILGNLIAITQTSMKRMLAYSSIGQIGYVIIGIIVGDSNGGYASMITYMLFYISMNLGTFACIVLFGLRTGTDNIRDYAGLYTKDPFLALSLALCLLSLGGLPPLAGFFGKLHLFWCGWQAGLYFLVSIGLLTSVISIYYYLKIIKLLMTGRNQEITPHVRNYRRSPLRSNNSIELSMIVCVIASTIPGISMNPIIAIAQDTLF.

13 consecutive transmembrane segments (helical) span residues 24-44 (LLLFDGSFIFPECILIFGLIL), 57-77 (IPWFYFISSTSLVMSITALLF), 99-119 (IFQFLILLCSTLCIPLSVEYI), 124-144 (MAITEFLLFVLTATLGGMFLC), 149-169 (LITIFVAPECFSLCSYLLSGY), 183-203 (YLLMGGASSSILVHGFSWLYG), 227-247 (PGILIALLFITVGIGFKLSLA), 295-315 (WHLLLEILAILSMILGNLIAI), 323-343 (MLAYSSIGQIGYVIIGIIVGD), 354-374 (YMLFYISMNLGTFACIVLFGL), 395-415 (ALSLALCLLSLGGLPPLAGFF), 428-448 (GLYFLVSIGLLTSVISIYYYL), and 484-504 (MIVCVIASTIPGISMNPIIAI).

Belongs to the complex I subunit 2 family. As to quaternary structure, NDH is composed of at least 16 different subunits, 5 of which are encoded in the nucleus.

The protein localises to the plastid. Its subcellular location is the chloroplast thylakoid membrane. It catalyses the reaction a plastoquinone + NADH + (n+1) H(+)(in) = a plastoquinol + NAD(+) + n H(+)(out). The catalysed reaction is a plastoquinone + NADPH + (n+1) H(+)(in) = a plastoquinol + NADP(+) + n H(+)(out). Functionally, NDH shuttles electrons from NAD(P)H:plastoquinone, via FMN and iron-sulfur (Fe-S) centers, to quinones in the photosynthetic chain and possibly in a chloroplast respiratory chain. The immediate electron acceptor for the enzyme in this species is believed to be plastoquinone. Couples the redox reaction to proton translocation, and thus conserves the redox energy in a proton gradient. This chain is NAD(P)H-quinone oxidoreductase subunit 2 B, chloroplastic, found in Eucalyptus globulus subsp. globulus (Tasmanian blue gum).